A 70-amino-acid polypeptide reads, in one-letter code: Large ribosomal subunit protein bL31 (70 aa).

Positions 16, 18, 37, and 40 each coordinate Zn(2+).

The protein belongs to the bacterial ribosomal protein bL31 family. Type A subfamily. As to quaternary structure, part of the 50S ribosomal subunit. Zn(2+) is required as a cofactor.

Its function is as follows. Binds the 23S rRNA. The protein is Large ribosomal subunit protein bL31 of Enterobacter sp. (strain 638).